The sequence spans 536 residues: Beta-hexosaminidase subunit beta (536 aa).

The N-terminal stretch at 1–31 (MPQSPRSAPGLLLLQALVSLVSLALVAPARL) is a signal peptide. A glycan (N-linked (GlcNAc...) asparagine) is linked at Asn-63. An intrachain disulfide couples Cys-70 to Cys-116. Residues Asn-169 and Asn-306 are each glycosylated (N-linked (GlcNAc...) asparagine). Cystine bridges form between Cys-288–Cys-339 and Cys-513–Cys-530. The active-site Proton donor is Glu-334.

This sequence belongs to the glycosyl hydrolase 20 family. In terms of assembly, there are 3 forms of beta-hexosaminidase: hexosaminidase A is a heterodimer composed of one subunit alpha and one subunit beta (chain A and B); hexosaminidase B is a homodimer of two beta subunits (two chains A and B); hexosaminidase S is a homodimer of two alpha subunits. The composition of the dimer (isozyme A versus isozyme S) has a significant effect on the substrate specificity of the alpha subunit active site.

It is found in the lysosome. Its subcellular location is the cytoplasmic vesicle. The protein localises to the secretory vesicle. It localises to the cortical granule. It carries out the reaction Hydrolysis of terminal non-reducing N-acetyl-D-hexosamine residues in N-acetyl-beta-D-hexosaminides.. It catalyses the reaction N-acetyl-beta-D-galactosaminyl-(1-&gt;4)-beta-D-3-sulfogalactosyl-(1-&gt;4)-beta-D-glucosyl-(1&lt;-&gt;1')-ceramide + H2O = a beta-D-3-sulfogalactosyl-(1-&gt;4)-beta-D-glucosyl-(1&lt;-&gt;1')-ceramide + N-acetyl-beta-D-galactosamine. The enzyme catalyses a ganglioside GM2 (d18:1(4E)) + H2O = a ganglioside GM3 (d18:1(4E)) + N-acetyl-beta-D-galactosamine. The catalysed reaction is a ganglioside GM2 + H2O = a ganglioside GM3 + N-acetyl-beta-D-galactosamine. It carries out the reaction beta-D-GalNAc-(1-&gt;4)-alpha-L-IdoA-(1-&gt;3)-beta-D-GalNAc-4-sulfate-(1-&gt;4)-alpha-L-IdoA-(1-&gt;3)-D-GalNAc-4-sulfate + H2O = alpha-L-IdoA-(1-&gt;3)-beta-D-GalNAc-4-sulfate-(1-&gt;4)-alpha-L-IdoA-(1-&gt;3)-D-GalNAc-4-sulfate + N-acetyl-D-galactosamine. It catalyses the reaction N-acetyl-beta-D-6-sulfogalactosaminyl-(1-&gt;4)-alpha-L-iduronyl-(1-&gt;3)-N-acetyl-D-6-sulfogalactosamine + H2O = alpha-L-iduronyl-(1-&gt;3)-N-acetyl-D-6-sulfogalactosamine + N-acetyl-D-6-sulfogalactosamine. Addition of GM2A stimulates the hydrolysis of sulfated glycosphingolipid SM2 and the ganglioside GM2. In terms of biological role, hydrolyzes the non-reducing end N-acetyl-D-hexosamine and/or sulfated N-acetyl-D-hexosamine of glycoconjugates, such as the oligosaccharide moieties from proteins and neutral glycolipids, or from certain mucopolysaccharides. The isozyme B does not hydrolyze each of these substrates, however hydrolyzes efficiently neutral oligosaccharide. Only the isozyme A is responsible for the degradation of GM2 gangliosides in the presence of GM2A. During fertilization is responsible, at least in part, for the zona block to polyspermy. Present in the cortical granules of non-activated oocytes, is exocytosed during the cortical reaction in response to oocyte activation and inactivates the sperm galactosyltransferase-binding site, accounting for the block in sperm binding to the zona pellucida. The chain is Beta-hexosaminidase subunit beta from Mus musculus (Mouse).